The chain runs to 838 residues: DNA gyrase subunit A (838 aa).

The Topo IIA-type catalytic domain maps to 41 to 510 (LPEVRDGLKP…ADGDVSDEDL (470 aa)). The O-(5'-phospho-DNA)-tyrosine intermediate role is filled by Tyr-129. The short motif at 537 to 543 (QKRGGKG) is the GyrA-box element.

The protein belongs to the type II topoisomerase GyrA/ParC subunit family. In terms of assembly, heterotetramer, composed of two GyrA and two GyrB chains. In the heterotetramer, GyrA contains the active site tyrosine that forms a transient covalent intermediate with DNA, while GyrB binds cofactors and catalyzes ATP hydrolysis. Mg(2+) is required as a cofactor.

It is found in the cytoplasm. It catalyses the reaction ATP-dependent breakage, passage and rejoining of double-stranded DNA.. With respect to regulation, DNA supercoiling is inhibited by EDTA, novobiocin, coumermycin and ciprofloxacin. Functionally, a type II topoisomerase that negatively supercoils closed circular double-stranded (ds) DNA in an ATP-dependent manner to modulate DNA topology and maintain chromosomes in an underwound state. Also catalyzes the interconversion of other topological isomers of double-stranded DNA rings, including catenanes and knotted rings. Relaxes negatively supercoiled DNA in an ATP-independent manner. A linear reaction intermediate can be trapped in the presence of the antibiotic ciprofloxacin. Negative supercoiling favors strand separation, and DNA replication, transcription, recombination and repair, all of which involve strand separation. Type II topoisomerases break and join 2 DNA strands simultaneously in an ATP-dependent manner. In Mycobacterium bovis (strain BCG / Pasteur 1173P2), this protein is DNA gyrase subunit A.